Reading from the N-terminus, the 172-residue chain is Nascent polypeptide-associated complex subunit beta (172 aa).

2 disordered regions span residues 36-58 and 142-172; these read KTGK…GDDK and QNMQ…DKVE. Positions 41 to 50 are enriched in basic residues; it reads TPRRKMKRAP. Positions 54–119 constitute an NAC-A/B domain; sequence GGDDKKLQQT…GEDKELTELV (66 aa).

It belongs to the NAC-beta family. Part of the nascent polypeptide-associated complex (NAC), consisting of EGD2 and EGD1. NAC associates with ribosomes via EGD1.

The protein localises to the cytoplasm. The protein resides in the nucleus. Functionally, component of the nascent polypeptide-associated complex (NAC), a dynamic component of the ribosomal exit tunnel, protecting the emerging polypeptides from interaction with other cytoplasmic proteins to ensure appropriate nascent protein targeting. The NAC complex also promotes mitochondrial protein import by enhancing productive ribosome interactions with the outer mitochondrial membrane and blocks the inappropriate interaction of ribosomes translating non-secretory nascent polypeptides with translocation sites in the membrane of the endoplasmic reticulum. EGD1 may act as a transcription factor that exert a negative effect on the expression of several genes that are transcribed by RNA polymerase II. This Pyricularia oryzae (strain 70-15 / ATCC MYA-4617 / FGSC 8958) (Rice blast fungus) protein is Nascent polypeptide-associated complex subunit beta (EGD1).